The chain runs to 187 residues: ADP-ribosylation factor-like protein 9 (187 aa).

Residues 25–32, 69–73, and 126–129 each bind GTP; these read GLDGAGKT, EIGGS, and NKQD.

This sequence belongs to the small GTPase superfamily. Arf family.

The polypeptide is ADP-ribosylation factor-like protein 9 (ARL9) (Homo sapiens (Human)).